A 403-amino-acid polypeptide reads, in one-letter code: MSEKGRLFTSESVTEGHPDKICDAISDSVLDALLAADPRSRVAVETLVTTGQVHVVGEVATSAKEAFADITNTVRARILEIGYDSSDKGFDGATCGVNIGIGAQSPDIAQGVDTAHEARVEGAADPLDSQGAGDQGLMFGYAINATPELMPLPIALAHRLSRRLTEVRKNGVLPYLRPDGKTQVTIAYEDNVPVRLDTVVISTQHAADIDLEKTLDPDIREKVLNTVLDDLAHETLDASTVRVLVNPTGKFVLGGPMGDAGLTGRKIIVDTYGGWARHGGGAFSGKDPSKVDRSAAYAMRWVAKNVVAAGLAERVEVQVAYAIGKAAPVGLFVETFGTETEDPVKIEKAIGEVFDLRPGAIIRDLNLLRPIYAPTAAYGHFGRTDVELPWEQLDKVDDLKRAI.

His-17 is a binding site for ATP. Residue Asp-19 coordinates Mg(2+). Position 45 (Glu-45) interacts with K(+). L-methionine is bound by residues Glu-58 and Gln-104. Positions 104 to 114 are flexible loop; sequence QSPDIAQGVDT. ATP contacts are provided by residues 179 to 181, 250 to 251, Asp-259, 265 to 266, Ala-282, and Lys-286; these read DGK, KF, and RK. Position 259 (Asp-259) interacts with L-methionine. Lys-290 contributes to the L-methionine binding site.

This sequence belongs to the AdoMet synthase family. As to quaternary structure, homotetramer; dimer of dimers. Requires Mg(2+) as cofactor. The cofactor is K(+).

It is found in the cytoplasm. The catalysed reaction is L-methionine + ATP + H2O = S-adenosyl-L-methionine + phosphate + diphosphate. The protein operates within amino-acid biosynthesis; S-adenosyl-L-methionine biosynthesis; S-adenosyl-L-methionine from L-methionine: step 1/1. In terms of biological role, catalyzes the formation of S-adenosylmethionine (AdoMet) from methionine and ATP. The overall synthetic reaction is composed of two sequential steps, AdoMet formation and the subsequent tripolyphosphate hydrolysis which occurs prior to release of AdoMet from the enzyme. The chain is S-adenosylmethionine synthase from Mycobacterium bovis (strain ATCC BAA-935 / AF2122/97).